Reading from the N-terminus, the 206-residue chain is Protein-methionine-sulfoxide reductase heme-binding subunit MsrQ (206 aa).

The next 5 helical transmembrane spans lie at 13–33, 79–99, 116–136, 147–167, and 169–189; these read IAIW…INLG, LLGL…SILE, PYLT…LTST, WQKL…HYLW, and VKTL…LLLL.

The protein belongs to the MsrQ family. Heterodimer of a catalytic subunit (MsrP) and a heme-binding subunit (MsrQ). The cofactor is FMN. Heme b is required as a cofactor.

The protein localises to the cell inner membrane. In terms of biological role, part of the MsrPQ system that repairs oxidized periplasmic proteins containing methionine sulfoxide residues (Met-O), using respiratory chain electrons. Thus protects these proteins from oxidative-stress damage caused by reactive species of oxygen and chlorine generated by the host defense mechanisms. MsrPQ is essential for the maintenance of envelope integrity under bleach stress, rescuing a wide series of structurally unrelated periplasmic proteins from methionine oxidation. MsrQ provides electrons for reduction to the reductase catalytic subunit MsrP, using the quinone pool of the respiratory chain. This Yersinia pestis bv. Antiqua (strain Antiqua) protein is Protein-methionine-sulfoxide reductase heme-binding subunit MsrQ.